The chain runs to 2415 residues: Spectrin alpha chain, erythrocytic 1 (2415 aa).

Spectrin repeat units follow at residues 52–152 (YHYQ…SDVL), 157–259 (KFYQ…ESLS), 263–365 (DLQR…AKLK), 370–471 (YHRF…HQYR), 475–576 (DFHL…RKLL), 580–681 (QLLQ…GTQL), 686–787 (QLLQ…KKKL), 792–894 (KLQQ…NDLK), and 898–967 (QLQQ…QQQQ). Serine 257 bears the Phosphoserine mark. Residues 975-1034 (GREARVIALYDFEARSRREVSMKKNDVLTLLSSINKDWWKVEADDHQGFVPAVYVRKLAP) enclose the SH3 domain. Serine 990 carries the phosphoserine modification. 11 Spectrin repeats span residues 1085–1177 (LAYE…YQLL), 1183–1285 (VEMF…SLNE), 1287–1390 (HKFF…KMLD), 1394–1489 (ELQL…QLLT), 1499–1603 (DLKQ…KLNE), 1606–1709 (RQQR…KLKE), 1712–1815 (ALFQ…NLEE), 1818–1921 (EYLQ…SQLD), 1924–2029 (HAFQ…KLLE), 2040–2142 (LFME…QELQ), and 2154–2254 (MCQE…NLEQ). Position 1972 is a phosphoserine (serine 1972). EF-hand domains follow at residues 2267–2302 (ETLK…LNYY), 2310–2345 (EPEP…KESE), and 2347–2382 (IKTS…EQVS). Ca(2+)-binding residues include aspartate 2280, asparagine 2282, threonine 2284, arginine 2286, glutamate 2291, aspartate 2323, tyrosine 2329, and aspartate 2334.

It belongs to the spectrin family. In terms of assembly, composed of non-homologous chains, alpha and beta, which aggregate to form dimers, tetramers, and higher polymers. Interacts with FASLG. Interacts with BCAM.

The protein resides in the cytoplasm. The protein localises to the cytoskeleton. It is found in the cell cortex. Functionally, spectrin is the major constituent of the cytoskeletal network underlying the erythrocyte plasma membrane. It associates with band 4.1 and actin to form the cytoskeletal superstructure of the erythrocyte plasma membrane. In Mus musculus (Mouse), this protein is Spectrin alpha chain, erythrocytic 1 (Spta1).